Reading from the N-terminus, the 374-residue chain is Cell wall integrity and stress response component 1 (374 aa).

The first 29 residues, 1–29 (MVFLNSSPFKGRLLFFVYLLIISTRLVAA), serve as a signal peptide directing secretion. The Extracellular segment spans residues 30–292 (DMNTQYGCYL…SNHTSLNAGA (263 aa)). The region spanning 31–119 (MNTQYGCYLV…DLYWSVYLTG (89 aa)) is the WSC domain. The segment at 132–236 (VSSTTSSSSS…SSSSSSRPSS (105 aa)) is disordered. Asn278 and Asn284 each carry an N-linked (GlcNAc...) asparagine glycan. A helical membrane pass occupies residues 293–313 (IVGIVIGCVAFAVVMALCIFL). Residues 314–374 (YFYFRRFKIR…RKILRVTNLN (61 aa)) are Cytoplasmic-facing. Residue Ser354 is modified to Phosphoserine.

O-mannosylated.

It localises to the membrane. The chain is Cell wall integrity and stress response component 1 (wsc1) from Schizosaccharomyces pombe (strain 972 / ATCC 24843) (Fission yeast).